The chain runs to 424 residues: Glutamate-1-semialdehyde 2,1-aminomutase (424 aa).

N6-(pyridoxal phosphate)lysine is present on K258.

Belongs to the class-III pyridoxal-phosphate-dependent aminotransferase family. HemL subfamily. Requires pyridoxal 5'-phosphate as cofactor.

It is found in the cytoplasm. The enzyme catalyses (S)-4-amino-5-oxopentanoate = 5-aminolevulinate. It participates in porphyrin-containing compound metabolism; protoporphyrin-IX biosynthesis; 5-aminolevulinate from L-glutamyl-tRNA(Glu): step 2/2. The polypeptide is Glutamate-1-semialdehyde 2,1-aminomutase (Pyrobaculum neutrophilum (strain DSM 2338 / JCM 9278 / NBRC 100436 / V24Sta) (Thermoproteus neutrophilus)).